We begin with the raw amino-acid sequence, 535 residues long: T-complex protein 1 subunit zeta (535 aa).

This sequence belongs to the TCP-1 chaperonin family. As to quaternary structure, heterooligomeric complex of about 850 to 900 kDa that forms two stacked rings, 12 to 16 nm in diameter.

It localises to the cytoplasm. Its function is as follows. Molecular chaperone; assists the folding of proteins upon ATP hydrolysis. Known to play a role, in vitro, in the folding of actin and tubulin. This chain is T-complex protein 1 subunit zeta (cct6), found in Schizosaccharomyces pombe (strain 972 / ATCC 24843) (Fission yeast).